A 368-amino-acid polypeptide reads, in one-letter code: Germination protease (368 aa).

The propeptide occupies 1-15 (MKEPLDLSKYSVRTD).

This sequence belongs to the peptidase A25 family. As to quaternary structure, homotetramer. Post-translationally, autoproteolytically processed. The inactive tetrameric zymogen termed p46 autoprocesses to a smaller form termed p41, which is active only during spore germination.

It catalyses the reaction Endopeptidase action with P4 Glu or Asp, P1 preferably Glu &gt; Asp, P1' hydrophobic and P2' Ala.. Initiates the rapid degradation of small, acid-soluble proteins during spore germination. The sequence is that of Germination protease from Bacillus anthracis (strain A0248).